The chain runs to 303 residues: Probable cat1 operon transcriptional activator (303 aa).

Residues 1-58 (MDLRQFRYFVAVARERNFTRAARQLNIAQPPLSRQIQLLEEEVGVPLLIRNSRPVQLT) form the HTH lysR-type domain. The H-T-H motif DNA-binding region spans 18-37 (FTRAARQLNIAQPPLSRQIQ).

This sequence belongs to the LysR transcriptional regulatory family.

In terms of biological role, probable positive regulator of the cat1 operon which encode enzymes responsible for the degradation of catechol to acetyl-CoA via the beta-ketoadipate pathway. In Acinetobacter lwoffii, this protein is Probable cat1 operon transcriptional activator.